A 200-amino-acid polypeptide reads, in one-letter code: Methylamine utilization protein MauD (200 aa).

A helical transmembrane segment spans residues 4 to 24 (FLIASNILLWLAFLGVTVVML). The region spanning 49-183 (PDIGDAAPEF…LESLLEADRT (135 aa)) is the Thioredoxin domain.

Its subcellular location is the membrane. The protein operates within one-carbon metabolism; methylamine degradation. In terms of biological role, may be specifically involved in the processing, transport, and/or maturation of the MADH beta-subunit. This chain is Methylamine utilization protein MauD (mauD), found in Paracoccus denitrificans.